Reading from the N-terminus, the 180-residue chain is Aspartate 1-decarboxylase (180 aa).

Ser24 (schiff-base intermediate with substrate; via pyruvic acid) is an active-site residue. Ser24 bears the Pyruvic acid (Ser) mark. Thr56 contacts substrate. Residue Tyr57 is the Proton donor of the active site. 72-74 lines the substrate pocket; the sequence is GAA.

The protein belongs to the PanD family. As to quaternary structure, heterooctamer of four alpha and four beta subunits. Pyruvate is required as a cofactor. In terms of processing, is synthesized initially as an inactive proenzyme, which is activated by self-cleavage at a specific serine bond to produce a beta-subunit with a hydroxyl group at its C-terminus and an alpha-subunit with a pyruvoyl group at its N-terminus.

Its subcellular location is the cytoplasm. It carries out the reaction L-aspartate + H(+) = beta-alanine + CO2. It participates in cofactor biosynthesis; (R)-pantothenate biosynthesis; beta-alanine from L-aspartate: step 1/1. Catalyzes the pyruvoyl-dependent decarboxylation of aspartate to produce beta-alanine. This chain is Aspartate 1-decarboxylase, found in Paramagnetospirillum magneticum (strain ATCC 700264 / AMB-1) (Magnetospirillum magneticum).